Reading from the N-terminus, the 354-residue chain is Methylthioribose-1-phosphate isomerase (354 aa).

Residues 58–60 (RGA), Arg-101, and Gln-204 contribute to the substrate site. Asp-245 functions as the Proton donor in the catalytic mechanism. Position 255–256 (255–256 (NK)) interacts with substrate.

Belongs to the eIF-2B alpha/beta/delta subunits family. MtnA subfamily.

The enzyme catalyses 5-(methylsulfanyl)-alpha-D-ribose 1-phosphate = 5-(methylsulfanyl)-D-ribulose 1-phosphate. The protein operates within amino-acid biosynthesis; L-methionine biosynthesis via salvage pathway; L-methionine from S-methyl-5-thio-alpha-D-ribose 1-phosphate: step 1/6. In terms of biological role, catalyzes the interconversion of methylthioribose-1-phosphate (MTR-1-P) into methylthioribulose-1-phosphate (MTRu-1-P). The protein is Methylthioribose-1-phosphate isomerase of Xanthomonas axonopodis pv. citri (strain 306).